The following is a 475-amino-acid chain: Ribulose bisphosphate carboxylase large chain (475 aa).

Positions Met1 to Ser2 are excised as a propeptide. Residue Pro3 is modified to N-acetylproline. Lys14 carries the post-translational modification N6,N6,N6-trimethyllysine. The substrate site is built by Asn123 and Thr173. Lys175 serves as the catalytic Proton acceptor. Residue Lys177 coordinates substrate. Residues Lys201, Asp203, and Glu204 each contribute to the Mg(2+) site. Lys201 carries the post-translational modification N6-carboxylysine. Catalysis depends on His294, which acts as the Proton acceptor. 3 residues coordinate substrate: Arg295, His327, and Ser379.

Belongs to the RuBisCO large chain family. Type I subfamily. Heterohexadecamer of 8 large chains and 8 small chains; disulfide-linked. The disulfide link is formed within the large subunit homodimers. Requires Mg(2+) as cofactor. In terms of processing, the disulfide bond which can form in the large chain dimeric partners within the hexadecamer appears to be associated with oxidative stress and protein turnover.

The protein localises to the plastid. It is found in the chloroplast. It catalyses the reaction 2 (2R)-3-phosphoglycerate + 2 H(+) = D-ribulose 1,5-bisphosphate + CO2 + H2O. The enzyme catalyses D-ribulose 1,5-bisphosphate + O2 = 2-phosphoglycolate + (2R)-3-phosphoglycerate + 2 H(+). In terms of biological role, ruBisCO catalyzes two reactions: the carboxylation of D-ribulose 1,5-bisphosphate, the primary event in carbon dioxide fixation, as well as the oxidative fragmentation of the pentose substrate in the photorespiration process. Both reactions occur simultaneously and in competition at the same active site. The sequence is that of Ribulose bisphosphate carboxylase large chain from Notothixos subaureus (Golden mistletoe).